The primary structure comprises 346 residues: Phosphoribosylformylglycinamidine cyclo-ligase (346 aa).

This sequence belongs to the AIR synthase family.

The protein resides in the cytoplasm. It carries out the reaction 2-formamido-N(1)-(5-O-phospho-beta-D-ribosyl)acetamidine + ATP = 5-amino-1-(5-phospho-beta-D-ribosyl)imidazole + ADP + phosphate + H(+). The protein operates within purine metabolism; IMP biosynthesis via de novo pathway; 5-amino-1-(5-phospho-D-ribosyl)imidazole from N(2)-formyl-N(1)-(5-phospho-D-ribosyl)glycinamide: step 2/2. This Shewanella pealeana (strain ATCC 700345 / ANG-SQ1) protein is Phosphoribosylformylglycinamidine cyclo-ligase.